We begin with the raw amino-acid sequence, 319 residues long: Annexin A4 (319 aa).

Ala-2 carries the N-acetylalanine modification. Thr-7 is subject to Phosphothreonine. Ser-12 is modified (phosphoserine). Annexin repeat units follow at residues 14-85 (FNAM…GMMT), 86-157 (PTVL…SLSA), 169-241 (ALVR…AIVK), and 245-316 (NKSA…VLCG). Residues Lys-213, Lys-293, and Lys-300 each carry the N6-acetyllysine modification.

This sequence belongs to the annexin family.

It is found in the zymogen granule membrane. Its function is as follows. Calcium/phospholipid-binding protein which promotes membrane fusion and is involved in exocytosis. This is Annexin A4 from Homo sapiens (Human).